The primary structure comprises 162 residues: Nucleotide-binding protein A2cp1_0112 (162 aa).

The protein belongs to the YajQ family.

In terms of biological role, nucleotide-binding protein. This Anaeromyxobacter dehalogenans (strain 2CP-1 / ATCC BAA-258) protein is Nucleotide-binding protein A2cp1_0112.